Consider the following 399-residue polypeptide: Stearoyl-[acyl-carrier-protein] 9-desaturase, seed specific, chloroplastic (399 aa).

Residues 1–34 (MALKFNPLVSQPYKLASSARPPVSTFRSPKFLCL) constitute a chloroplast transit peptide. Fe cation is bound by residues Glu-141, Glu-179, His-182, Glu-232, Glu-265, and His-268.

The protein belongs to the fatty acid desaturase type 2 family. As to quaternary structure, homodimer. Fe(2+) serves as cofactor. In terms of tissue distribution, developing seeds.

The protein localises to the plastid. It is found in the chloroplast. It carries out the reaction octadecanoyl-[ACP] + 2 reduced [2Fe-2S]-[ferredoxin] + O2 + 2 H(+) = (9Z)-octadecenoyl-[ACP] + 2 oxidized [2Fe-2S]-[ferredoxin] + 2 H2O. The protein operates within lipid metabolism; fatty acid metabolism. Its function is as follows. Converts stearoyl-ACP to oleoyl-ACP by introduction of a cis double bond between carbons Delta(9) and Delta(10) of the acyl chain. This chain is Stearoyl-[acyl-carrier-protein] 9-desaturase, seed specific, chloroplastic, found in Brassica napus (Rape).